A 69-amino-acid chain; its full sequence is uncharacterized protein (69 aa).

Residues Met-1 to Ser-18 form the signal peptide. The disordered stretch occupies residues Arg-17–Val-69. Positions Ser-18–Ser-61 are enriched in low complexity.

The protein resides in the secreted. This is an uncharacterized protein from Dictyostelium discoideum (Social amoeba).